Here is a 315-residue protein sequence, read N- to C-terminus: Porphobilinogen deaminase (315 aa).

An S-(dipyrrolylmethanemethyl)cysteine modification is found at cysteine 251.

The protein belongs to the HMBS family. Monomer. The cofactor is dipyrromethane.

It carries out the reaction 4 porphobilinogen + H2O = hydroxymethylbilane + 4 NH4(+). It participates in porphyrin-containing compound metabolism; protoporphyrin-IX biosynthesis; coproporphyrinogen-III from 5-aminolevulinate: step 2/4. Tetrapolymerization of the monopyrrole PBG into the hydroxymethylbilane pre-uroporphyrinogen in several discrete steps. The chain is Porphobilinogen deaminase from Sphingopyxis alaskensis (strain DSM 13593 / LMG 18877 / RB2256) (Sphingomonas alaskensis).